Reading from the N-terminus, the 63-residue chain is Small ribosomal subunit protein eS30 (63 aa).

Residues 1–33 (MGKVHGSLARAGKVKSQTPKVEKQEKPKKPQGR) form a disordered region.

It belongs to the eukaryotic ribosomal protein eS30 family. Component of the small ribosomal subunit. Mature ribosomes consist of a small (40S) and a large (60S) subunit. The 40S subunit contains about 32 different proteins and 1 molecule of RNA (18S). The 60S subunit contains 45 different proteins and 3 molecules of RNA (25S, 5.8S and 5S).

The protein localises to the cytoplasm. Component of the ribosome, a large ribonucleoprotein complex responsible for the synthesis of proteins in the cell. The small ribosomal subunit (SSU) binds messenger RNAs (mRNAs) and translates the encoded message by selecting cognate aminoacyl-transfer RNA (tRNA) molecules. The large subunit (LSU) contains the ribosomal catalytic site termed the peptidyl transferase center (PTC), which catalyzes the formation of peptide bonds, thereby polymerizing the amino acids delivered by tRNAs into a polypeptide chain. The nascent polypeptides leave the ribosome through a tunnel in the LSU and interact with protein factors that function in enzymatic processing, targeting, and the membrane insertion of nascent chains at the exit of the ribosomal tunnel. In Candida albicans (strain SC5314 / ATCC MYA-2876) (Yeast), this protein is Small ribosomal subunit protein eS30 (RPS30).